Reading from the N-terminus, the 584-residue chain is Cilia- and flagella-associated protein 184 (584 aa).

Basic and acidic residues-rich tracts occupy residues 1–18, 42–57, and 67–82; these read MDSHYGDIEGKDRAEEGL, PEPKPEPEPTQGREPE, and SKAKDSEGIDYAHVEV. The interval 1–243 is disordered; the sequence is MDSHYGDIEG…ASTEEFEWTA (243 aa). A compositionally biased stretch (acidic residues) spans 119-146; it reads DKDEDEDEDEDEDEDEDEDEDEDEDEGE. The segment covering 189 to 232 has biased composition (basic and acidic residues); that stretch reads AKEKARESLKKRDSEEIEGTDRERHKSTEEQLHPGEAKEEEKQK. Coiled coils occupy residues 317-470 and 530-561; these read LAML…SNVQ and LLGKESLLRDLEEKVEKTEMLNRRLESLKRHH.

It belongs to the CFAP184 family. Forms a complex with CFAP263; the interaction is required for functional activity in cilia.

It localises to the cell projection. The protein resides in the cilium. It is found in the cytoplasm. Its subcellular location is the cytoskeleton. The protein localises to the microtubule organizing center. It localises to the centrosome. Functionally, in complex with CFAP263, acts as a regulator of ciliary beating that connects radial spoke 3 (RS3) to the inner dynein arm (IDA) and the nexin-dynein regulatory complex (N-DRC). The complex is positioned parallel to N-DRC and forms a connection between the arch at the base of RS3, the IDA tail and N-DRC. This Mus musculus (Mouse) protein is Cilia- and flagella-associated protein 184 (Cfap184).